The following is a 563-amino-acid chain: Formate--tetrahydrofolate ligase (563 aa).

65-72 provides a ligand contact to ATP; that stretch reads TPLGEGKT.

This sequence belongs to the formate--tetrahydrofolate ligase family.

The catalysed reaction is (6S)-5,6,7,8-tetrahydrofolate + formate + ATP = (6R)-10-formyltetrahydrofolate + ADP + phosphate. It functions in the pathway one-carbon metabolism; tetrahydrofolate interconversion. This chain is Formate--tetrahydrofolate ligase, found in Cutibacterium acnes (strain DSM 16379 / KPA171202) (Propionibacterium acnes).